Consider the following 173-residue polypeptide: uncharacterized protein (173 aa).

The segment covering 1–11 has biased composition (basic and acidic residues); the sequence is MLCAKNKKDPK. The interval 1 to 173 is disordered; the sequence is MLCAKNKKDP…EKMEKSEKAY (173 aa). The span at 17 to 41 shows a compositional bias: polar residues; it reads FSETSKVQNVQNTQPKPAAPSQMSI. Basic and acidic residues-rich tracts occupy residues 56–109 and 120–144; these read KSVE…KADN and AKKEQEEENPKTDLESHKDEAEAKK. The span at 145 to 156 shows a compositional bias: basic residues; that stretch reads KESRRQKKMRNK. The segment covering 157–173 has biased composition (basic and acidic residues); it reads NSKEGSVEKMEKSEKAY.

This is an uncharacterized protein from Caenorhabditis elegans.